A 477-amino-acid polypeptide reads, in one-letter code: Aspartyl/glutamyl-tRNA(Asn/Gln) amidotransferase subunit B (477 aa).

This sequence belongs to the GatB/GatE family. GatB subfamily. Heterotrimer of A, B and C subunits.

It catalyses the reaction L-glutamyl-tRNA(Gln) + L-glutamine + ATP + H2O = L-glutaminyl-tRNA(Gln) + L-glutamate + ADP + phosphate + H(+). The enzyme catalyses L-aspartyl-tRNA(Asn) + L-glutamine + ATP + H2O = L-asparaginyl-tRNA(Asn) + L-glutamate + ADP + phosphate + 2 H(+). Allows the formation of correctly charged Asn-tRNA(Asn) or Gln-tRNA(Gln) through the transamidation of misacylated Asp-tRNA(Asn) or Glu-tRNA(Gln) in organisms which lack either or both of asparaginyl-tRNA or glutaminyl-tRNA synthetases. The reaction takes place in the presence of glutamine and ATP through an activated phospho-Asp-tRNA(Asn) or phospho-Glu-tRNA(Gln). This Legionella pneumophila (strain Lens) protein is Aspartyl/glutamyl-tRNA(Asn/Gln) amidotransferase subunit B.